The following is a 412-amino-acid chain: Elongation factor 1-gamma 2 (412 aa).

The residue at position 2 (Ser2) is an N-acetylserine. The 76-residue stretch at 2 to 77 folds into the GST N-terminal domain; the sequence is SQGTLYINRS…YLANQVADEK (76 aa). Positions 86 to 217 constitute a GST C-terminal domain; the sequence is DVIEKSQILR…AEKALTYTPP (132 aa). Residues 216–253 form a disordered region; that stretch reads PPKKQKAEKPKAEKSKAEKKKDEAKPADDAAPAKKPKH. Over residues 220-247 the composition is skewed to basic and acidic residues; sequence QKAEKPKAEKSKAEKKKDEAKPADDAAP. Positions 251–412 constitute an EF-1-gamma C-terminal domain; the sequence is PKHPLEALGK…KEIVDGKVLK (162 aa).

As to quaternary structure, the eukaryotic elongation factor 1 complex (eEF1) is probably a heterohexamer. Two trimeric complexes, each composed of eEF1A (TEF1 or TEF2), eEF1Balpha (EFB1) and eEF1Bgamma (CAM1 or TEF4), are probably dimerized via the eF1Bgamma subunits. The eEF1B subcomplex with the GEF activity is formed of eEF1Balpha and eEF1Bgamma. TEF4 interacts with EFB1.

It is found in the cytoplasm. The protein operates within protein biosynthesis; polypeptide chain elongation. Functionally, subunit of the eukaryotic elongation factor 1 complex (eEF1). Probably plays a role in anchoring the complex to other cellular components. This chain is Elongation factor 1-gamma 2 (TEF4), found in Saccharomyces cerevisiae (strain ATCC 204508 / S288c) (Baker's yeast).